Here is a 272-residue protein sequence, read N- to C-terminus: Soluble interferon gamma receptor OPG193 (272 aa).

The N-terminal stretch at 1 to 13 (MRYIIILAVLFIN) is a signal peptide. 3 N-linked (GlcNAc...) asparagine; by host glycosylation sites follow: Asn-42, Asn-150, and Asn-267.

The protein belongs to the type II cytokine receptor family. Homodimer. Interacts with host IFNG.

Its subcellular location is the secreted. Its function is as follows. Counteracts the antiviral effects of host IFN-gamma. Acts as a soluble IFN-gamma receptor and thus inhibits the interaction between host IFN-gamma and its receptor. In Bos taurus (Bovine), this protein is Soluble interferon gamma receptor OPG193 (OPG193).